The primary structure comprises 479 residues: UDP-N-acetylmuramate--L-alanine ligase (479 aa).

115 to 121 (GTHGKTT) serves as a coordination point for ATP.

The protein belongs to the MurCDEF family.

It localises to the cytoplasm. It catalyses the reaction UDP-N-acetyl-alpha-D-muramate + L-alanine + ATP = UDP-N-acetyl-alpha-D-muramoyl-L-alanine + ADP + phosphate + H(+). It functions in the pathway cell wall biogenesis; peptidoglycan biosynthesis. In terms of biological role, cell wall formation. The sequence is that of UDP-N-acetylmuramate--L-alanine ligase from Acidiphilium cryptum (strain JF-5).